A 261-amino-acid chain; its full sequence is DNA repair protein RecO (261 aa).

This sequence belongs to the RecO family.

Functionally, involved in DNA repair and RecF pathway recombination. This Pelodictyon phaeoclathratiforme (strain DSM 5477 / BU-1) protein is DNA repair protein RecO.